The primary structure comprises 528 residues: Poly(A) RNA polymerase GLD2 (528 aa).

Disordered stretches follow at residues 1-41 (MYPN…QPQQ) and 99-121 (RDQS…KRRS). 2 stretches are compositionally biased toward low complexity: residues 16–32 (PCEQ…EQPL) and 102–113 (SPLISPASPSSS). Residues aspartate 259 and aspartate 261 each coordinate Mg(2+). The PAP-associated domain maps to 428–481 (LGDLLLGFLKYFAIEFDWSKDIISVREAKALPRSDDYEWRNKFICVEEPYDRTN).

The protein belongs to the DNA polymerase type-B-like family. GLD2 subfamily. As to quaternary structure, component of a complex at least composed of cpeb1, cpsf1, tent2/gld2, pabpc1/ePAB, parn and sympk. Following oocyte maturation, parn is expelled from the complex. Interacts with rbm9 and sympk. Mg(2+) is required as a cofactor. Mn(2+) serves as cofactor.

It localises to the cytoplasm. It carries out the reaction RNA(n) + ATP = RNA(n)-3'-adenine ribonucleotide + diphosphate. Cytoplasmic poly(A) RNA polymerase that adds successive AMP monomers to the 3'-end of specific RNAs, forming a poly(A) tail. In contrast to the canonical nuclear poly(A) RNA polymerase, it only adds poly(A) to selected cytoplasmic mRNAs during oocyte maturation. Plays a central role during oocyte maturation by mediating polyadenylation of dormant mRNAs, which contain 5'AAUAAA-3' sequence in their 3'-UTR. In immature oocytes, polyadenylation of poly(A) tails is counteracted by the ribonuclease parn. During maturation parn is excluded from the ribonucleoprotein complex, allowing poly(A) elongation and activation of mRNAs. May not play a role in replication-dependent histone mRNA degradation. In Xenopus tropicalis (Western clawed frog), this protein is Poly(A) RNA polymerase GLD2 (tent2).